Consider the following 373-residue polypeptide: Ca(2+)/H(+) antiporter (373 aa).

Transmembrane regions (helical) follow at residues 6–26, 29–49, 61–81, 94–114, 134–154, 162–182, 220–240, 249–269, 291–311, 318–338, and 349–369; these read TIFF…WLHW, VSIF…MGEA, LGGL…AFIA, ITGS…LLGG, MNLA…SNGI, LSVA…LFSM, FWLG…ELLV, SLGL…GNAA, VGST…AGWI, LDFN…ANSI, and GSLL…HPVV.

This sequence belongs to the Ca(2+):cation antiporter (CaCA) (TC 2.A.19) family. Cation/proton exchanger (CAX) subfamily.

It localises to the cell inner membrane. In terms of biological role, ca(+)/H(+) antiporter that extrudes calcium in exchange for external protons. Plays an important role in salt tolerance. Does not transport sodium or lithium. This chain is Ca(2+)/H(+) antiporter, found in Aphanothece halophytica.